A 258-amino-acid chain; its full sequence is 5'-nucleotidase SurE (258 aa).

Residues aspartate 18, aspartate 19, serine 49, and asparagine 102 each contribute to the a divalent metal cation site.

This sequence belongs to the SurE nucleotidase family. Requires a divalent metal cation as cofactor.

Its subcellular location is the cytoplasm. The catalysed reaction is a ribonucleoside 5'-phosphate + H2O = a ribonucleoside + phosphate. Nucleotidase that shows phosphatase activity on nucleoside 5'-monophosphates. This Vibrio campbellii (strain ATCC BAA-1116) protein is 5'-nucleotidase SurE.